We begin with the raw amino-acid sequence, 180 residues long: ATP synthase subunit delta (180 aa).

It belongs to the ATPase delta chain family. As to quaternary structure, F-type ATPases have 2 components, F(1) - the catalytic core - and F(0) - the membrane proton channel. F(1) has five subunits: alpha(3), beta(3), gamma(1), delta(1), epsilon(1). F(0) has three main subunits: a(1), b(2) and c(10-14). The alpha and beta chains form an alternating ring which encloses part of the gamma chain. F(1) is attached to F(0) by a central stalk formed by the gamma and epsilon chains, while a peripheral stalk is formed by the delta and b chains.

The protein resides in the cell membrane. F(1)F(0) ATP synthase produces ATP from ADP in the presence of a proton or sodium gradient. F-type ATPases consist of two structural domains, F(1) containing the extramembraneous catalytic core and F(0) containing the membrane proton channel, linked together by a central stalk and a peripheral stalk. During catalysis, ATP synthesis in the catalytic domain of F(1) is coupled via a rotary mechanism of the central stalk subunits to proton translocation. Functionally, this protein is part of the stalk that links CF(0) to CF(1). It either transmits conformational changes from CF(0) to CF(1) or is implicated in proton conduction. This chain is ATP synthase subunit delta, found in Lactobacillus delbrueckii subsp. bulgaricus (strain ATCC 11842 / DSM 20081 / BCRC 10696 / JCM 1002 / NBRC 13953 / NCIMB 11778 / NCTC 12712 / WDCM 00102 / Lb 14).